The following is a 147-amino-acid chain: Hemoglobin subunit beta (147 aa).

An N-acetylvaline modification is found at V2. A Globin domain is found at 3-147; sequence NLTSDEKTAV…VANALAHKYH (145 aa). At S45 the chain carries Phosphoserine. K60 carries the post-translational modification N6-acetyllysine. Position 64 (H64) interacts with heme b. At K83 the chain carries N6-acetyllysine. H93 contributes to the heme b binding site. C94 is modified (S-nitrosocysteine). K145 carries the post-translational modification N6-acetyllysine.

The protein belongs to the globin family. In terms of assembly, heterotetramer of two alpha chains and two beta chains. Red blood cells.

Functionally, involved in oxygen transport from the lung to the various peripheral tissues. In Dasypus novemcinctus (Nine-banded armadillo), this protein is Hemoglobin subunit beta (HBB).